The primary structure comprises 144 residues: Mannitol-specific phosphotransferase enzyme IIA component (144 aa).

A PTS EIIA type-2 domain is found at 3–142; that stretch reads ELFSNDNIFL…EEIKQVFEEA (140 aa). The active-site Tele-phosphohistidine intermediate is His-63. His-63 is subject to Phosphohistidine; by HPr.

In terms of assembly, homodimer or homotrimer. Seems to be a monomer when not phosphorylated.

Its subcellular location is the cytoplasm. The phosphoenolpyruvate-dependent sugar phosphotransferase system (sugar PTS), a major carbohydrate active transport system, catalyzes the phosphorylation of incoming sugar substrates concomitantly with their translocation across the cell membrane. The enzyme II CmtAB PTS system is involved in D-mannitol transport. The sequence is that of Mannitol-specific phosphotransferase enzyme IIA component (mtlF) from Staphylococcus aureus (strain COL).